The sequence spans 251 residues: PF03932 family protein CutC (251 aa).

It belongs to the CutC family.

It is found in the cytoplasm. The protein is PF03932 family protein CutC of Erwinia tasmaniensis (strain DSM 17950 / CFBP 7177 / CIP 109463 / NCPPB 4357 / Et1/99).